We begin with the raw amino-acid sequence, 545 residues long: Membrane protein insertase YidC (545 aa).

The next 4 helical transmembrane spans lie at 350–370 (IIGNWGWAIVVLTIIVKAVLY), 424–444 (LPMLLQIPVFIGLYWALFASV), 461–481 (ADPYYILPIIMAATMFAQTYL), and 498–518 (PLVFSVMFFFFPAGLVLYWVV).

This sequence belongs to the OXA1/ALB3/YidC family. Type 1 subfamily. Interacts with the Sec translocase complex via SecD. Specifically interacts with transmembrane segments of nascent integral membrane proteins during membrane integration.

The protein resides in the cell inner membrane. Its function is as follows. Required for the insertion and/or proper folding and/or complex formation of integral membrane proteins into the membrane. Involved in integration of membrane proteins that insert both dependently and independently of the Sec translocase complex, as well as at least some lipoproteins. Aids folding of multispanning membrane proteins. This is Membrane protein insertase YidC from Neisseria gonorrhoeae (strain NCCP11945).